The primary structure comprises 110 residues: Probable ribonuclease HepT (110 aa).

Active-site residues include R75 and H80. The short motif at 75-82 (RDKLIHAY) is the RX(4)HXY motif element. Position 82 is an O-di-AMP-tyrosine (Y82).

It belongs to the HepT RNase toxin family. Modified by cognate antitoxin MntA; probably at least 2 successive AMPylation events occur on Tyr-82.

In terms of biological role, toxic component of a type VII toxin-antitoxin (TA) system. Overexpression in E.coli inhibits cell growth. Neutralized by cognate antitoxin MntA. Neutralization is probably due to AMPylation by MntA. Probably an RNAase. In Thermococcus cleftensis (strain DSM 27260 / KACC 17922 / CL1), this protein is Probable ribonuclease HepT.